A 167-amino-acid chain; its full sequence is MVHIEKQISDLQEKLIAVNRVSKTVKGGRIFSFTALTVVGDSNGRVGFGYGKAREVPTAIQKAMDKARRNMTTIVLNSGGTLQHSIKGVHTGSRVFMQPASEGTGIIAGGAMRAVLEVTGIRNVLAKTYGSTNPINVVRATINALNKMKSPEMIAAKRGKTIEEILR.

The region spanning 11 to 74 (LQEKLIAVNR…DKARRNMTTI (64 aa)) is the S5 DRBM domain.

It belongs to the universal ribosomal protein uS5 family. Part of the 30S ribosomal subunit. Contacts proteins S4 and S8.

In terms of biological role, with S4 and S12 plays an important role in translational accuracy. Located at the back of the 30S subunit body where it stabilizes the conformation of the head with respect to the body. The chain is Small ribosomal subunit protein uS5 from Baumannia cicadellinicola subsp. Homalodisca coagulata.